A 926-amino-acid chain; its full sequence is DNA mismatch repair protein MutS (926 aa).

The disordered stretch occupies residues 1-67 (MAASPNPLQG…NPNQINDLDQ (67 aa)). Composition is skewed to polar residues over residues 18 to 44 (QSTT…QLKS) and 57 to 67 (KNPNQINDLDQ). 726 to 733 (GPNASGKS) contacts ATP.

This sequence belongs to the DNA mismatch repair MutS family.

This protein is involved in the repair of mismatches in DNA. It is possible that it carries out the mismatch recognition step. This protein has a weak ATPase activity. In Prochlorococcus marinus (strain NATL1A), this protein is DNA mismatch repair protein MutS.